The primary structure comprises 151 residues: Phosphopantetheine adenylyltransferase (151 aa).

Thr9 contacts substrate. ATP contacts are provided by residues Thr9–Phe10 and His17. Lys41, Thr73, and Arg87 together coordinate substrate. ATP-binding positions include Gly88–Arg90, Glu98, and Leu122–Thr128.

This sequence belongs to the bacterial CoaD family. In terms of assembly, homohexamer. It depends on Mg(2+) as a cofactor.

Its subcellular location is the cytoplasm. The enzyme catalyses (R)-4'-phosphopantetheine + ATP + H(+) = 3'-dephospho-CoA + diphosphate. The protein operates within cofactor biosynthesis; coenzyme A biosynthesis; CoA from (R)-pantothenate: step 4/5. In terms of biological role, reversibly transfers an adenylyl group from ATP to 4'-phosphopantetheine, yielding dephospho-CoA (dPCoA) and pyrophosphate. The polypeptide is Phosphopantetheine adenylyltransferase (Phocaeicola vulgatus (strain ATCC 8482 / DSM 1447 / JCM 5826 / CCUG 4940 / NBRC 14291 / NCTC 11154) (Bacteroides vulgatus)).